Here is a 332-residue protein sequence, read N- to C-terminus: Acryloyl-coenzyme A reductase (332 aa).

Residue cysteine 38 participates in Zn(2+) binding. Tyrosine 39 is a binding site for NADP(+). 6 residues coordinate Zn(2+): histidine 60, aspartate 90, cysteine 93, cysteine 96, cysteine 104, and cysteine 146. NADP(+) contacts are provided by residues 172 to 175 and 194 to 196; these read SGGV and TTS.

This sequence belongs to the zinc-containing alcohol dehydrogenase family. In terms of assembly, monomer. Zn(2+) serves as cofactor.

It carries out the reaction propanoyl-CoA + NADP(+) = acryloyl-CoA + NADPH + H(+). Plays a role in autotrophic carbon fixation via the 3-hydroxypropionate/4-hydroxybutyrate cycle. Catalyzes the acryloyl-CoA dependent NADPH oxidation and formation of propionyl-CoA. In Metallosphaera sedula (strain ATCC 51363 / DSM 5348 / JCM 9185 / NBRC 15509 / TH2), this protein is Acryloyl-coenzyme A reductase.